The primary structure comprises 277 residues: Kallikrein-13 (277 aa).

Positions 1–16 (MWPLALVIASLTLALS) are cleaved as a signal peptide. Asparagine 30 carries N-linked (GlcNAc...) asparagine glycosylation. In terms of domain architecture, Peptidase S1 spans 36-263 (LPGGYTCFPH…YVLWIRETIR (228 aa)). Disulfide bonds link cysteine 42/cysteine 178, cysteine 61/cysteine 77, cysteine 157/cysteine 224, cysteine 189/cysteine 203, and cysteine 214/cysteine 239. Residues histidine 76 and aspartate 124 each act as charge relay system in the active site. Serine 218 functions as the Charge relay system in the catalytic mechanism. Asparagine 225 carries an N-linked (GlcNAc...) asparagine glycan.

Belongs to the peptidase S1 family. Kallikrein subfamily. In terms of tissue distribution, expressed in prostate, breast, testis and salivary gland.

The protein resides in the secreted. The sequence is that of Kallikrein-13 (KLK13) from Homo sapiens (Human).